The sequence spans 130 residues: Flagellar assembly factor FliW (130 aa).

It belongs to the FliW family. In terms of assembly, interacts with translational regulator CsrA and flagellin(s).

The protein localises to the cytoplasm. Acts as an anti-CsrA protein, binds CsrA and prevents it from repressing translation of its target genes, one of which is flagellin. Binds to flagellin and participates in the assembly of the flagellum. This chain is Flagellar assembly factor FliW, found in Borrelia duttonii (strain Ly).